A 164-amino-acid polypeptide reads, in one-letter code: Transcription elongation factor GreA (164 aa).

The stretch at 11–76 (EESYDRLKAE…LQELLNNAKV (66 aa)) forms a coiled coil.

The protein belongs to the GreA/GreB family.

Its function is as follows. Necessary for efficient RNA polymerase transcription elongation past template-encoded arresting sites. The arresting sites in DNA have the property of trapping a certain fraction of elongating RNA polymerases that pass through, resulting in locked ternary complexes. Cleavage of the nascent transcript by cleavage factors such as GreA or GreB allows the resumption of elongation from the new 3'terminus. GreA releases sequences of 2 to 3 nucleotides. In Mycolicibacterium vanbaalenii (strain DSM 7251 / JCM 13017 / BCRC 16820 / KCTC 9966 / NRRL B-24157 / PYR-1) (Mycobacterium vanbaalenii), this protein is Transcription elongation factor GreA.